Consider the following 215-residue polypeptide: Somatotropin (215 aa).

The signal sequence occupies residues 1–25 (MAPGARISLLLLITFTLLGPQRSGA). Residue histidine 44 coordinates Zn(2+). Cysteine 77 and cysteine 188 are oxidised to a cystine. Serine 130 bears the Phosphoserine mark. Glutamate 197 lines the Zn(2+) pocket. Cysteine 205 and cysteine 213 form a disulfide bridge.

Belongs to the somatotropin/prolactin family.

The protein resides in the secreted. Functionally, plays an important role in growth control. Its major role in stimulating body growth is to stimulate the liver and other tissues to secrete IGF1. It stimulates both the differentiation and proliferation of myoblasts. It also stimulates amino acid uptake and protein synthesis in muscle and other tissues. The protein is Somatotropin (GH1) of Trichosurus vulpecula (Brush-tailed possum).